The sequence spans 598 residues: Dihydroxy-acid dehydratase, mitochondrial (598 aa).

The transit peptide at 1-18 (MMFCKLLRCQNGIASKRA) directs the protein to the mitochondrion. C84 provides a ligand contact to [2Fe-2S] cluster. D116 is a Mg(2+) binding site. C157 provides a ligand contact to [2Fe-2S] cluster. D158 provides a ligand contact to Mg(2+). [2Fe-2S] cluster is bound at residue C232. Position 485 (E485) interacts with Mg(2+). S511 acts as the Proton acceptor in catalysis.

Belongs to the IlvD/Edd family. It depends on [2Fe-2S] cluster as a cofactor. Mg(2+) serves as cofactor.

It is found in the mitochondrion. The catalysed reaction is (2R)-2,3-dihydroxy-3-methylbutanoate = 3-methyl-2-oxobutanoate + H2O. It carries out the reaction (2R,3R)-2,3-dihydroxy-3-methylpentanoate = (S)-3-methyl-2-oxopentanoate + H2O. It participates in amino-acid biosynthesis; L-isoleucine biosynthesis; L-isoleucine from 2-oxobutanoate: step 3/4. Its pathway is amino-acid biosynthesis; L-valine biosynthesis; L-valine from pyruvate: step 3/4. Dihydroxyacid dehydratase that catalyzes the third step in the common pathway leading to biosynthesis of branched-chain amino acids. Catalyzes the dehydration of (2R,3R)-2,3-dihydroxy-3-methylpentanoate (2,3-dihydroxy-3-methylvalerate) into 2-oxo-3-methylpentanoate (2-oxo-3-methylvalerate) and of (2R)-2,3-dihydroxy-3-methylbutanoate (2,3-dihydroxyisovalerate) into 2-oxo-3-methylbutanoate (2-oxoisovalerate), the penultimate precursor to L-isoleucine and L-valine, respectively. The sequence is that of Dihydroxy-acid dehydratase, mitochondrial from Schizosaccharomyces pombe (strain 972 / ATCC 24843) (Fission yeast).